The following is a 1399-amino-acid chain: FYVE, RhoGEF and PH domain-containing protein 6 (1399 aa).

Disordered regions lie at residues 1–99 (MTSA…KDVR), 138–164 (MKEN…SEKC), 185–210 (LTQQ…NGDH), 235–281 (AHHN…DGIS), 299–341 (YTSK…NGSS), and 367–479 (PVDE…KKPQ). Residues 50–60 (PAIAPKPKVPT) are compositionally biased toward low complexity. Residues 259–276 (AESRGHTDSCEPENKRVA) show a composition bias toward basic and acidic residues. A compositionally biased stretch (basic residues) spans 307–321 (KPRKTHAAARLRRQK). Composition is skewed to polar residues over residues 332–341 (EPGNSNNGSS) and 377–402 (RALT…QQTP). Over residues 403-418 (SLDTDSSLTSDSSGSG) the composition is skewed to low complexity. Over residues 428-453 (TYTQCSTQPLSLPKQVTSACTDQPPA) the composition is skewed to polar residues. A phosphoserine mark is found at Ser-494, Ser-531, and Ser-583. The segment at 515–542 (RNYLHHPGPPNHGASASPFDMPNPTSEK) is disordered. Disordered regions lie at residues 631–650 (QHGD…GLES) and 657–678 (TGEE…SLES). Ser-670 and Ser-697 each carry phosphoserine. The interval 768-840 (APDGQLQLDP…KQDEDAGMKS (73 aa)) is disordered. A compositionally biased stretch (acidic residues) spans 802-817 (PSDEEVINSSDEDDVS). Residues 821 to 838 (SKGEPDPLEDKQDEDAGM) show a composition bias toward basic and acidic residues. A DH domain is found at 841 to 1030 (KVHHIAKEIM…IEVANHANDT (190 aa)). The 95-residue stretch at 1059–1153 (VFLKEGTLMK…WLEAISSSIE (95 aa)) folds into the PH 1 domain. Ser-1167 is subject to Phosphoserine. The FYVE-type zinc finger occupies 1191–1250 (DTRATMCMICTSEFTLTWRRHHCRACGKIVCQACSSNKYGLDYLKGQLARVCEHCFQELQ). 8 residues coordinate Zn(2+): Cys-1197, Cys-1200, Cys-1213, Cys-1216, Cys-1221, Cys-1224, Cys-1242, and Cys-1245. Residues 1302-1398 (DSTMSGYLYR…WIDAFQEGTV (97 aa)) form the PH 2 domain.

The protein localises to the cytoplasm. It is found in the cytoskeleton. Functionally, may activate CDC42, a member of the Ras-like family of Rho- and Rac proteins, by exchanging bound GDP for free GTP. May play a role in regulating the actin cytoskeleton and cell shape. The protein is FYVE, RhoGEF and PH domain-containing protein 6 (Fgd6) of Mus musculus (Mouse).